Here is a 494-residue protein sequence, read N- to C-terminus: Cytochrome P450 2A10 (494 aa).

N6-acetyllysine is present on Lys379. Cys439 contributes to the heme binding site.

The protein belongs to the cytochrome P450 family. It depends on heme as a cofactor. As to expression, expressed in liver and lung as well as in nasal tissues.

The protein localises to the endoplasmic reticulum membrane. It localises to the microsome membrane. The enzyme catalyses an organic molecule + reduced [NADPH--hemoprotein reductase] + O2 = an alcohol + oxidized [NADPH--hemoprotein reductase] + H2O + H(+). In terms of biological role, catalyzes the oxygenation of a variety of substrates, including ethanol and procarcinogens such as N-nitrosodiethylamine and phenacetin. Exhibits a high coumarin 7-hydroxylase activity. Converts also testosterone to androstenedione. In Oryctolagus cuniculus (Rabbit), this protein is Cytochrome P450 2A10 (CYP2A10).